A 113-amino-acid chain; its full sequence is Putative insulin-like growth factor 2-associated protein (113 aa).

Expressed in fetal and adult liver.

The polypeptide is Putative insulin-like growth factor 2-associated protein (Homo sapiens (Human)).